The sequence spans 243 residues: Carboxy-S-adenosyl-L-methionine synthase (243 aa).

Residues Tyr40, 65–67 (GCS), 90–91 (DN), 118–119 (DI), Asn133, and Arg200 each bind S-adenosyl-L-methionine.

The protein belongs to the class I-like SAM-binding methyltransferase superfamily. Cx-SAM synthase family. Homodimer.

It carries out the reaction prephenate + S-adenosyl-L-methionine = carboxy-S-adenosyl-L-methionine + 3-phenylpyruvate + H2O. In terms of biological role, catalyzes the conversion of S-adenosyl-L-methionine (SAM) to carboxy-S-adenosyl-L-methionine (Cx-SAM). This Shewanella halifaxensis (strain HAW-EB4) protein is Carboxy-S-adenosyl-L-methionine synthase.